We begin with the raw amino-acid sequence, 290 residues long: S-methyl-5'-thioadenosine phosphorylase 2 (290 aa).

Phosphate-binding positions include serine 14, 57–58, and 90–91; these read RH and SA. Methionine 185 lines the substrate pocket. Serine 186 is a binding site for phosphate. 209–211 contacts substrate; that stretch reads DYD.

The protein belongs to the PNP/MTAP phosphorylase family. MTAP subfamily. As to quaternary structure, homotrimer.

It localises to the cytoplasm. It is found in the nucleus. It catalyses the reaction S-methyl-5'-thioadenosine + phosphate = 5-(methylsulfanyl)-alpha-D-ribose 1-phosphate + adenine. Its pathway is amino-acid biosynthesis; L-methionine biosynthesis via salvage pathway; S-methyl-5-thio-alpha-D-ribose 1-phosphate from S-methyl-5'-thioadenosine (phosphorylase route): step 1/1. Functionally, catalyzes the reversible phosphorylation of S-methyl-5'-thioadenosine (MTA) to adenine and 5-methylthioribose-1-phosphate. Involved in the breakdown of MTA, a major by-product of polyamine biosynthesis. Responsible for the first step in the methionine salvage pathway after MTA has been generated from S-adenosylmethionine. Has broad substrate specificity with 6-aminopurine nucleosides as preferred substrates. In Puccinia graminis f. sp. tritici (strain CRL 75-36-700-3 / race SCCL) (Black stem rust fungus), this protein is S-methyl-5'-thioadenosine phosphorylase 2.